The chain runs to 156 residues: Small ribosomal subunit protein uS7 (156 aa).

Belongs to the universal ribosomal protein uS7 family. As to quaternary structure, part of the 30S ribosomal subunit. Contacts proteins S9 and S11.

One of the primary rRNA binding proteins, it binds directly to 16S rRNA where it nucleates assembly of the head domain of the 30S subunit. Is located at the subunit interface close to the decoding center, probably blocks exit of the E-site tRNA. The polypeptide is Small ribosomal subunit protein uS7 (Aliivibrio fischeri (strain MJ11) (Vibrio fischeri)).